A 538-amino-acid chain; its full sequence is Putative outer membrane porin BglH (538 aa).

The signal sequence occupies residues 1–25 (MFRRNLITSAILLMAPLAFSAQSLA). The disordered stretch occupies residues 52-82 (KDEEKKKYTPATVNRSVSTNDQGYAANPFPT). Residues 62–73 (ATVNRSVSTNDQ) show a composition bias toward polar residues.

The protein belongs to the porin LamB (TC 1.B.3) family.

It localises to the cell outer membrane. In terms of biological role, may be a sugar porin with a broad carbohydrate specificity. The sequence is that of Putative outer membrane porin BglH (bglH) from Shigella sonnei (strain Ss046).